A 200-amino-acid chain; its full sequence is Large ribosomal subunit protein uL4 (200 aa).

The segment at 38-80 (GRQGSKQQKTRSDVSGGGKRPWRQKGTGRARAGTTRGPIWRGG) is disordered.

This sequence belongs to the universal ribosomal protein uL4 family. As to quaternary structure, part of the 50S ribosomal subunit.

Its function is as follows. One of the primary rRNA binding proteins, this protein initially binds near the 5'-end of the 23S rRNA. It is important during the early stages of 50S assembly. It makes multiple contacts with different domains of the 23S rRNA in the assembled 50S subunit and ribosome. In terms of biological role, forms part of the polypeptide exit tunnel. The sequence is that of Large ribosomal subunit protein uL4 from Stutzerimonas stutzeri (strain A1501) (Pseudomonas stutzeri).